The chain runs to 320 residues: Pyrroline-5-carboxylate reductase 2 (320 aa).

Ser2 carries the post-translational modification N-acetylserine. Residues 6–11 (IGAGQL) and Ser34 each bind NADP(+). Residues Ala8, Gln10, Leu11, Ser34, Glu36, Asn56, Val70, Lys71, and Ala97 each coordinate NADPH. Residues Asn56, 69-72 (AVKP), and 95-97 (CAA) each bind NADP(+). Position 164 (Glu164) interacts with L-proline. Position 230 (Asn230) interacts with NADPH. Residues Ala237 and Thr238 each coordinate L-proline. The interval 293-320 (ESPTVSTLAPPSSGKLLTRNPAQGSKRE) is disordered. At Ser304 the chain carries Phosphoserine.

It belongs to the pyrroline-5-carboxylate reductase family. Homodecamer; composed of 5 homodimers. Interacts with LTO1.

It localises to the cytoplasm. The protein resides in the mitochondrion. The enzyme catalyses L-proline + NADP(+) = (S)-1-pyrroline-5-carboxylate + NADPH + 2 H(+). The catalysed reaction is L-proline + NAD(+) = (S)-1-pyrroline-5-carboxylate + NADH + 2 H(+). It functions in the pathway amino-acid biosynthesis; L-proline biosynthesis; L-proline from L-glutamate 5-semialdehyde: step 1/1. In terms of biological role, oxidoreductase that catalyzes the last step in proline biosynthesis, which corresponds to the reduction of pyrroline-5-carboxylate to L-proline using NAD(P)H. At physiologic concentrations, has higher specific activity in the presence of NADH. Involved in cellular response to oxidative stress. In some cell types, such as erythrocytes, its primary function may be the generation of NADP(+). The protein is Pyrroline-5-carboxylate reductase 2 of Rattus norvegicus (Rat).